A 343-amino-acid polypeptide reads, in one-letter code: Autoinducer 2 import system permease protein LsrC (343 aa).

9 helical membrane-spanning segments follow: residues 13–33, 38–58, 61–81, 92–112, 114–134, 154–174, 212–232, 251–271, and 283–303; these read FLAI…YLSF, MIFA…LVML, NIDV…GVAL, LFAL…VVGL, IPAI…MLLW, VALG…IGAW, INGM…GFVP, GISL…AFFL, and LPAW…LVLD. The segment at 321-343 is disordered; sequence RFQPGNKGGKHVTPFPKRKKEVA.

It belongs to the binding-protein-dependent transport system permease family. AraH/RbsC subfamily. As to quaternary structure, the complex is composed of two ATP-binding proteins (LsrA), two transmembrane proteins (LsrC and LsrD) and a solute-binding protein (LsrB).

Its subcellular location is the cell inner membrane. In terms of biological role, part of the ABC transporter complex LsrABCD involved in autoinducer 2 (AI-2) import. Probably responsible for the translocation of the substrate across the membrane. In Enterobacter sp. (strain 638), this protein is Autoinducer 2 import system permease protein LsrC (lsrC).